We begin with the raw amino-acid sequence, 177 residues long: Large ribosomal subunit protein uL5 (177 aa).

The protein belongs to the universal ribosomal protein uL5 family. Part of the 50S ribosomal subunit; part of the 5S rRNA/L5/L18/L25 subcomplex. Contacts the 5S rRNA and the P site tRNA. Forms a bridge to the 30S subunit in the 70S ribosome.

Functionally, this is one of the proteins that bind and probably mediate the attachment of the 5S RNA into the large ribosomal subunit, where it forms part of the central protuberance. In the 70S ribosome it contacts protein S13 of the 30S subunit (bridge B1b), connecting the 2 subunits; this bridge is implicated in subunit movement. Contacts the P site tRNA; the 5S rRNA and some of its associated proteins might help stabilize positioning of ribosome-bound tRNAs. The protein is Large ribosomal subunit protein uL5 of Ehrlichia chaffeensis (strain ATCC CRL-10679 / Arkansas).